Here is a 220-residue protein sequence, read N- to C-terminus: Uracil-DNA glycosylase (220 aa).

Asp-65 serves as the catalytic Proton acceptor.

It belongs to the uracil-DNA glycosylase (UDG) superfamily. UNG family.

The protein resides in the cytoplasm. It carries out the reaction Hydrolyzes single-stranded DNA or mismatched double-stranded DNA and polynucleotides, releasing free uracil.. Excises uracil residues from the DNA which can arise as a result of misincorporation of dUMP residues by DNA polymerase or due to deamination of cytosine. The polypeptide is Uracil-DNA glycosylase (Phocaeicola vulgatus (strain ATCC 8482 / DSM 1447 / JCM 5826 / CCUG 4940 / NBRC 14291 / NCTC 11154) (Bacteroides vulgatus)).